The chain runs to 385 residues: Flavin-dependent monooxygenase (385 aa).

FAD-binding positions include 12–15 (ASIA), 34–36 (EKN), 44–47 (YAID), Arg-105, Tyr-267, Asp-289, and 296–302 (PLSGQGT).

The protein belongs to the aromatic-ring hydroxylase family. The cofactor is FAD.

It carries out the reaction 7-chlorotetracycline + NADPH + O2 + H(+) = (1S,10S,10aS)-3-(CONH2)-9-Cl-1-(Me2N)-3,3a,4,10-(HO)4-10-Me-2,5-dioxo-1H,10aH,11H,11aH-cyclopenta[b]anthracen-6-olate + CO + NADP(+) + H2O. The enzyme catalyses a tetracycline + NADPH + O2 + H(+) = a (1S,10aS)-3-(CONH2)-1-(Me2N)-3,3a,4,6-(HO)4-2,5-dioxo-1H,10aH,11H,11aH-cyclopenta[b]anthracene + CO + NADP(+) + H2O. With respect to regulation, inhibited by anhydrotetracycline. In terms of biological role, an FAD-requiring monooxygenase active on tetracycline antibiotic and some of its derivatives, which leads to their inactivation. Expression in E.coli confers high resistance to oxytetracycline, slightly less resistance to tetracycline, moderate resistance to minocycline but no resistance to tigecycline. Degrades tetracycline and oxytetracycline; the reaction requires NADPH. Degrades and confers resistance to chlortetracycline. This Unknown prokaryotic organism protein is Flavin-dependent monooxygenase.